The chain runs to 253 residues: MIENSSWSMTFEERENRRLQEASMRLEQENDDLAHELVTSKIALRNDLDQAEDKADVLNKELLLTKQRLVETEEEKRKQEEETAQLKEVFRKQLEKAEYEIKKTTAIIAEYKQICSQLSTRLEKQQAASKEELEVVKGKMMACKHCSDIFSKEGALKLAATGREDQGIETDDEKDSLKKQLREMELELAQTKLQLVEAKCKIQELEHQRGALMNEIQAAKNSWFSKTLNSIKTATGTQPLQPAPVTQPPKEST.

Residues 8–222 (SMTFEERENR…MNEIQAAKNS (215 aa)) adopt a coiled-coil conformation. Residues 233-253 (TATGTQPLQPAPVTQPPKEST) are disordered.

This chain is Rab GTPase-activating protein 1-like, isoform 10 (RABGAP1L), found in Homo sapiens (Human).